The primary structure comprises 767 residues: E3 ubiquitin-protein ligase pub1 (767 aa).

The region spanning 1-111 (MSNSAQSRRI…AIGGDEMLTR (111 aa)) is the C2 domain. A compositionally biased stretch (polar residues) spans 138–158 (LQVPSSAASGARTQRTSITND). Disordered regions lie at residues 138 to 216 (LQVP…RRTD) and 252 to 306 (SASS…RPYF). The residue at position 156 (threonine 156) is a Phosphothreonine. Over residues 159–176 (PQSSQSSSVSRNPASSRA) the composition is skewed to low complexity. Serine 178 is subject to Phosphoserine. Threonine 180 is subject to Phosphothreonine. Residues 184–194 (APAASPASSEP) show a composition bias toward low complexity. A WW 1 domain is found at 211–236 (WERRTDNLGRTYYVDHNTRSTTWIRP). The span at 257–286 (NVTEGVQPSSSNAARRTEASVLTSNATTAG) shows a compositional bias: polar residues. WW domains lie at 294–319 (WEQRYTPEGRPYFVDHNTRTTTWVDP) and 351–376 (WEMRLTNTARVYFVDHNTKTTTWDDP). Positions 463–767 (FLLSHEMFNP…VEETIGFGQE (305 aa)) constitute an HECT domain. Cysteine 735 functions as the Glycyl thioester intermediate in the catalytic mechanism.

It is found in the membrane. The protein localises to the cytoplasm. The catalysed reaction is S-ubiquitinyl-[E2 ubiquitin-conjugating enzyme]-L-cysteine + [acceptor protein]-L-lysine = [E2 ubiquitin-conjugating enzyme]-L-cysteine + N(6)-ubiquitinyl-[acceptor protein]-L-lysine.. It participates in protein modification; protein ubiquitination. Its function is as follows. E3 ubiquitin-protein ligase which accepts ubiquitin from an E2 ubiquitin-conjugating enzyme in the form of a thioester and then directly transfers the ubiquitin to targeted substrates. Regulates ubiquitination of cdc25. The protein is E3 ubiquitin-protein ligase pub1 (pub1) of Schizosaccharomyces pombe (strain 972 / ATCC 24843) (Fission yeast).